Consider the following 324-residue polypeptide: Beta-ketoacyl-[acyl-carrier-protein] synthase III (324 aa).

Catalysis depends on residues cysteine 112 and histidine 249. The ACP-binding stretch occupies residues 250 to 254 (QANDR). The active site involves asparagine 279.

It belongs to the thiolase-like superfamily. FabH family. In terms of assembly, homodimer.

The protein localises to the cytoplasm. It carries out the reaction malonyl-[ACP] + acetyl-CoA + H(+) = 3-oxobutanoyl-[ACP] + CO2 + CoA. It participates in lipid metabolism; fatty acid biosynthesis. In terms of biological role, catalyzes the condensation reaction of fatty acid synthesis by the addition to an acyl acceptor of two carbons from malonyl-ACP. Catalyzes the first condensation reaction which initiates fatty acid synthesis and may therefore play a role in governing the total rate of fatty acid production. Possesses both acetoacetyl-ACP synthase and acetyl transacylase activities. Its substrate specificity determines the biosynthesis of branched-chain and/or straight-chain of fatty acids. The polypeptide is Beta-ketoacyl-[acyl-carrier-protein] synthase III (Streptococcus pneumoniae serotype 2 (strain D39 / NCTC 7466)).